The primary structure comprises 305 residues: MLKQRTIKSLVKTVGIGLHSGRKVTLTLRPAPADTGIVFTRVDLPEAVEIPVAASAIGDTRLASVLQKDGARVSTVEHLMSACAGLGIDNLYVDVDAEEIPIMDGSAASFVFLLQSAGIEEQNALKTFIRVKKAVEVREGDKLARLEPFFGFKLSFTIDFRHPAVDKTGQTFSIDFADTSYVREIARARTFGFAHEVEALREMGLARGGSLDNAIVLDEHRMLNNEELRYGDEFVRHKILDAIGDLYVVGHPLIGAYVANKSGHGLNNQLLRALLADQEAYELVTFDRVEEAPVAFLPQAQPAFA.

Positions 78, 237, and 241 each coordinate Zn(2+). Catalysis depends on H264, which acts as the Proton donor.

Belongs to the LpxC family. The cofactor is Zn(2+).

It catalyses the reaction a UDP-3-O-[(3R)-3-hydroxyacyl]-N-acetyl-alpha-D-glucosamine + H2O = a UDP-3-O-[(3R)-3-hydroxyacyl]-alpha-D-glucosamine + acetate. Its pathway is glycolipid biosynthesis; lipid IV(A) biosynthesis; lipid IV(A) from (3R)-3-hydroxytetradecanoyl-[acyl-carrier-protein] and UDP-N-acetyl-alpha-D-glucosamine: step 2/6. In terms of biological role, catalyzes the hydrolysis of UDP-3-O-myristoyl-N-acetylglucosamine to form UDP-3-O-myristoylglucosamine and acetate, the committed step in lipid A biosynthesis. This chain is UDP-3-O-acyl-N-acetylglucosamine deacetylase, found in Cupriavidus necator (strain ATCC 17699 / DSM 428 / KCTC 22496 / NCIMB 10442 / H16 / Stanier 337) (Ralstonia eutropha).